We begin with the raw amino-acid sequence, 139 residues long: Peptide methionine sulfoxide reductase MsrB (139 aa).

A MsrB domain is found at 8–130; sequence DREWQRELSP…NSASLQLKTQ (123 aa). The Zn(2+) site is built by C47, C50, C96, and C99. C119 serves as the catalytic Nucleophile.

The protein belongs to the MsrB Met sulfoxide reductase family. The cofactor is Zn(2+).

The enzyme catalyses L-methionyl-[protein] + [thioredoxin]-disulfide + H2O = L-methionyl-(R)-S-oxide-[protein] + [thioredoxin]-dithiol. The chain is Peptide methionine sulfoxide reductase MsrB from Acinetobacter baumannii (strain SDF).